We begin with the raw amino-acid sequence, 227 residues long: Enolase-phosphatase E1 (227 aa).

This sequence belongs to the HAD-like hydrolase superfamily. MasA/MtnC family. As to quaternary structure, monomer. The cofactor is Mg(2+).

It carries out the reaction 5-methylsulfanyl-2,3-dioxopentyl phosphate + H2O = 1,2-dihydroxy-5-(methylsulfanyl)pent-1-en-3-one + phosphate. It participates in amino-acid biosynthesis; L-methionine biosynthesis via salvage pathway; L-methionine from S-methyl-5-thio-alpha-D-ribose 1-phosphate: step 3/6. It functions in the pathway amino-acid biosynthesis; L-methionine biosynthesis via salvage pathway; L-methionine from S-methyl-5-thio-alpha-D-ribose 1-phosphate: step 4/6. Its function is as follows. Bifunctional enzyme that catalyzes the enolization of 2,3-diketo-5-methylthiopentyl-1-phosphate (DK-MTP-1-P) into the intermediate 2-hydroxy-3-keto-5-methylthiopentenyl-1-phosphate (HK-MTPenyl-1-P), which is then dephosphorylated to form the acireductone 1,2-dihydroxy-3-keto-5-methylthiopentene (DHK-MTPene). The protein is Enolase-phosphatase E1 of Gluconobacter oxydans (strain 621H) (Gluconobacter suboxydans).